A 707-amino-acid polypeptide reads, in one-letter code: Polyribonucleotide nucleotidyltransferase (707 aa).

Mg(2+) is bound by residues Asp-487 and Asp-493. The KH domain maps to 554 to 613; the sequence is PSMATIKIDPDKIRDVIGKGGATIRKICDDTGASIDLDDDGTVRIYAEDKTAAKAAIDTV. One can recognise an S1 motif domain in the interval 623-691; that stretch reads GKLYRGTVAR…NRNRVKLSIK (69 aa).

The protein belongs to the polyribonucleotide nucleotidyltransferase family. As to quaternary structure, component of the RNA degradosome, which is a multiprotein complex involved in RNA processing and mRNA degradation. The cofactor is Mg(2+).

The protein resides in the cytoplasm. It carries out the reaction RNA(n+1) + phosphate = RNA(n) + a ribonucleoside 5'-diphosphate. Functionally, involved in mRNA degradation. Catalyzes the phosphorolysis of single-stranded polyribonucleotides processively in the 3'- to 5'-direction. In Chromohalobacter salexigens (strain ATCC BAA-138 / DSM 3043 / CIP 106854 / NCIMB 13768 / 1H11), this protein is Polyribonucleotide nucleotidyltransferase.